Here is a 281-residue protein sequence, read N- to C-terminus: Shikimate dehydrogenase (NADP(+)) (281 aa).

Residues 15-17 and threonine 62 contribute to the shikimate site; that span reads SKS. The active-site Proton acceptor is lysine 66. 2 residues coordinate shikimate: asparagine 87 and aspartate 102. Residues 127 to 131, 151 to 156, and leucine 217 each bind NADP(+); these read GAGGS and NRTPER. Shikimate is bound at residue tyrosine 219. An NADP(+)-binding site is contributed by glycine 241.

The protein belongs to the shikimate dehydrogenase family. As to quaternary structure, homodimer.

The enzyme catalyses shikimate + NADP(+) = 3-dehydroshikimate + NADPH + H(+). The protein operates within metabolic intermediate biosynthesis; chorismate biosynthesis; chorismate from D-erythrose 4-phosphate and phosphoenolpyruvate: step 4/7. Its function is as follows. Involved in the biosynthesis of the chorismate, which leads to the biosynthesis of aromatic amino acids. Catalyzes the reversible NADPH linked reduction of 3-dehydroshikimate (DHSA) to yield shikimate (SA). In Stenotrophomonas maltophilia (strain K279a), this protein is Shikimate dehydrogenase (NADP(+)).